We begin with the raw amino-acid sequence, 811 residues long: DEP domain-containing protein 1A (811 aa).

The DEP domain occupies 24–108 (FRAGMPLRKH…DNNQLFRFPA (85 aa)). Residues 281 to 321 (DYFLDLPEPLLTFEYYELFVNILVVCGYITVSDRSSGIHKI) enclose the Rho-GAP domain. The residue at position 512 (S512) is a Phosphoserine. Residues 598–653 (AIDALQLCCLLLPPPNRRKLQLLMRMISRMSQNVDMPKLHDAMGTRSLMIHTFSRC) are interaction with ZNF224.

In terms of assembly, isoform 2 and isoform 5 can form homodimers and heterodimers. Interacts with ZNF224. In terms of tissue distribution, expressed in testis. Up-regulated in bladder cancer cells (at protein level).

The protein resides in the nucleus. May be involved in transcriptional regulation as a transcriptional corepressor. The DEPDC1A-ZNF224 complex may play a critical role in bladder carcinogenesis by repressing the transcription of the A20 gene, leading to transport of NF-KB protein into the nucleus, resulting in suppression of apoptosis of bladder cancer cells. The polypeptide is DEP domain-containing protein 1A (DEPDC1) (Homo sapiens (Human)).